The primary structure comprises 142 residues: Transcription antitermination protein NusB (142 aa).

It belongs to the NusB family.

Involved in transcription antitermination. Required for transcription of ribosomal RNA (rRNA) genes. Binds specifically to the boxA antiterminator sequence of the ribosomal RNA (rrn) operons. This chain is Transcription antitermination protein NusB, found in Levilactobacillus brevis (strain ATCC 367 / BCRC 12310 / CIP 105137 / JCM 1170 / LMG 11437 / NCIMB 947 / NCTC 947) (Lactobacillus brevis).